Here is a 143-residue protein sequence, read N- to C-terminus: Monothiol glutaredoxin-5, mitochondrial (143 aa).

A mitochondrion-targeting transit peptide spans 1 to 28; that stretch reads MFGRISTRALLRPAFTHRIPSVSLSRFL. The Glutaredoxin domain occupies 33 to 138; the sequence is KQAIESAIES…KLLEDADALV (106 aa). Lys50 provides a ligand contact to glutathione. Cys58 is a [2Fe-2S] cluster binding site. Residues 90–94, Ile102, and 115–116 contribute to the glutathione site; these read REGVK and CD.

This sequence belongs to the glutaredoxin family. Monothiol subfamily. Homodimer.

The protein localises to the mitochondrion matrix. Its function is as follows. Monothiol glutaredoxin involved in mitochondrial iron-sulfur (Fe/S) cluster transfer. Receives iron-sulfur clusters from scaffold protein ISU1 and mediates their transfer to apoproteins, to the 4Fe/FS cluster biosynthesis machinery, or export from mitochondrion. This chain is Monothiol glutaredoxin-5, mitochondrial (GRX5), found in Lachancea kluyveri (Yeast).